Reading from the N-terminus, the 542-residue chain is Putative cysteine ligase BshC (542 aa).

Positions 458-479 form a coiled coil; sequence LTKNATLLQAQIDFLHQTLQRA.

This sequence belongs to the BshC family.

Its function is as follows. Involved in bacillithiol (BSH) biosynthesis. May catalyze the last step of the pathway, the addition of cysteine to glucosamine malate (GlcN-Mal) to generate BSH. In Geobacillus sp. (strain WCH70), this protein is Putative cysteine ligase BshC.